The sequence spans 290 residues: Acetyl-coenzyme A carboxylase carboxyl transferase subunit beta (290 aa).

Residues 28 to 290 (VMTKCPQCKK…KGGEEGWWRN (263 aa)) enclose the CoA carboxyltransferase N-terminal domain. 4 residues coordinate Zn(2+): Cys32, Cys35, Cys51, and Cys54. The segment at 32–54 (CPQCKKIMYTKELIKNLRVCLSC) adopts a C4-type zinc-finger fold.

It belongs to the AccD/PCCB family. In terms of assembly, acetyl-CoA carboxylase is a heterohexamer composed of biotin carboxyl carrier protein (AccB), biotin carboxylase (AccC) and two subunits each of ACCase subunit alpha (AccA) and ACCase subunit beta (AccD). Zn(2+) is required as a cofactor.

It localises to the cytoplasm. It catalyses the reaction N(6)-carboxybiotinyl-L-lysyl-[protein] + acetyl-CoA = N(6)-biotinyl-L-lysyl-[protein] + malonyl-CoA. The protein operates within lipid metabolism; malonyl-CoA biosynthesis; malonyl-CoA from acetyl-CoA: step 1/1. Component of the acetyl coenzyme A carboxylase (ACC) complex. Biotin carboxylase (BC) catalyzes the carboxylation of biotin on its carrier protein (BCCP) and then the CO(2) group is transferred by the transcarboxylase to acetyl-CoA to form malonyl-CoA. The protein is Acetyl-coenzyme A carboxylase carboxyl transferase subunit beta of Geobacillus kaustophilus (strain HTA426).